We begin with the raw amino-acid sequence, 99 residues long: DNA-directed RNA polymerase subunit omega (99 aa).

It belongs to the RNA polymerase subunit omega family. The RNAP catalytic core consists of 2 alpha, 1 beta, 1 beta' and 1 omega subunit. When a sigma factor is associated with the core the holoenzyme is formed, which can initiate transcription.

It carries out the reaction RNA(n) + a ribonucleoside 5'-triphosphate = RNA(n+1) + diphosphate. Its function is as follows. Promotes RNA polymerase assembly. Latches the N- and C-terminal regions of the beta' subunit thereby facilitating its interaction with the beta and alpha subunits. This is DNA-directed RNA polymerase subunit omega from Xanthomonas oryzae pv. oryzae (strain MAFF 311018).